A 156-amino-acid chain; its full sequence is Small ribosomal subunit protein uS7 (156 aa).

Belongs to the universal ribosomal protein uS7 family. As to quaternary structure, part of the 30S ribosomal subunit. Contacts proteins S9 and S11.

Its function is as follows. One of the primary rRNA binding proteins, it binds directly to 16S rRNA where it nucleates assembly of the head domain of the 30S subunit. Is located at the subunit interface close to the decoding center, probably blocks exit of the E-site tRNA. The sequence is that of Small ribosomal subunit protein uS7 from Sinorhizobium medicae (strain WSM419) (Ensifer medicae).